The primary structure comprises 267 residues: Tryptophan synthase alpha chain (267 aa).

Residues glutamate 43 and aspartate 54 each act as proton acceptor in the active site.

The protein belongs to the TrpA family. In terms of assembly, tetramer of two alpha and two beta chains.

The enzyme catalyses (1S,2R)-1-C-(indol-3-yl)glycerol 3-phosphate + L-serine = D-glyceraldehyde 3-phosphate + L-tryptophan + H2O. It participates in amino-acid biosynthesis; L-tryptophan biosynthesis; L-tryptophan from chorismate: step 5/5. In terms of biological role, the alpha subunit is responsible for the aldol cleavage of indoleglycerol phosphate to indole and glyceraldehyde 3-phosphate. This Bacillus licheniformis (strain ATCC 14580 / DSM 13 / JCM 2505 / CCUG 7422 / NBRC 12200 / NCIMB 9375 / NCTC 10341 / NRRL NRS-1264 / Gibson 46) protein is Tryptophan synthase alpha chain.